The sequence spans 786 residues: Endonuclease MutS2 (786 aa).

333 to 340 (GPNTGGKT) serves as a coordination point for ATP. One can recognise a Smr domain in the interval 711–786 (LDLRGERYDQ…GSGATIVNFK (76 aa)).

Belongs to the DNA mismatch repair MutS family. MutS2 subfamily. In terms of assembly, homodimer. Binds to stalled ribosomes, contacting rRNA.

In terms of biological role, endonuclease that is involved in the suppression of homologous recombination and thus may have a key role in the control of bacterial genetic diversity. Its function is as follows. Acts as a ribosome collision sensor, splitting the ribosome into its 2 subunits. Detects stalled/collided 70S ribosomes which it binds and splits by an ATP-hydrolysis driven conformational change. Acts upstream of the ribosome quality control system (RQC), a ribosome-associated complex that mediates the extraction of incompletely synthesized nascent chains from stalled ribosomes and their subsequent degradation. Probably generates substrates for RQC. This chain is Endonuclease MutS2, found in Lacticaseibacillus paracasei (strain ATCC 334 / BCRC 17002 / CCUG 31169 / CIP 107868 / KCTC 3260 / NRRL B-441) (Lactobacillus paracasei).